Here is a 185-residue protein sequence, read N- to C-terminus: Ribosome-recycling factor (185 aa).

This sequence belongs to the RRF family.

It localises to the cytoplasm. Its function is as follows. Responsible for the release of ribosomes from messenger RNA at the termination of protein biosynthesis. May increase the efficiency of translation by recycling ribosomes from one round of translation to another. The chain is Ribosome-recycling factor from Francisella philomiragia subsp. philomiragia (strain ATCC 25017 / CCUG 19701 / FSC 153 / O#319-036).